Consider the following 237-residue polypeptide: tRNA(His) guanylyltransferase (237 aa).

A2 carries the N-acetylalanine modification. D29 and G30 together coordinate Mg(2+). GTP contacts are provided by K32, F33, H34, K44, and D47. D77 is a binding site for Mg(2+).

The protein belongs to the tRNA(His) guanylyltransferase family. Homotetramer. It depends on Mg(2+) as a cofactor.

It catalyses the reaction a 5'-end ribonucleotide-tRNA(His) + GTP + ATP + H2O = a 5'-end phospho-guanosine-ribonucleotide-tRNA(His) + AMP + 2 diphosphate + H(+). It carries out the reaction a 5'-end ribonucleotide-RNA + a ribonucleoside 5'-triphosphate + ATP + H2O = a 5'-end phospho-ribonucleoside-ribonucleotide-RNA + AMP + 2 diphosphate + H(+). Its function is as follows. Acts as a tRNA(His) guanylyltransferase that catalyzes 3'-5' addition of a single guanosine residue to the -1 position of tRNA(His), to form a non-Watson-Crick G(-1):A-73 base pair. After addition of G(-1), THG1 removes pyrophosphate from the tRNA 5'-end, generating 5'-monophosphorylated G(-1)-containing tRNA which is important for recognition of tRNA(His) by its cognate histidyl-tRNA synthetase. In addition to the single-G(-1) addition reaction, THG1 polymerizes multiple G residues to the 5'-end of tRNA(His) variants using the 3'-end of the tRNA(His) acceptor stem as a template. The chain is tRNA(His) guanylyltransferase from Saccharomyces cerevisiae (strain ATCC 204508 / S288c) (Baker's yeast).